A 497-amino-acid polypeptide reads, in one-letter code: Di-/tripeptide transporter (497 aa).

Transmembrane regions (helical) follow at residues 3 to 23, 26 to 46, 57 to 77, 84 to 104, 119 to 139, 155 to 175, 199 to 219, 227 to 247, 294 to 314, 321 to 341, 372 to 392, and 452 to 472; these read AILL…MSQT, ASIM…GGWL, VFYG…PAGV, IALI…MVGG, IFVF…PWAA, AGFS…VLGG, IKWV…MAGV, VITL…VMMF, FIIL…KVII, LVLL…TFVL, GIEI…LIIL, and IVII…WSYI.

This sequence belongs to the major facilitator superfamily. Proton-dependent oligopeptide transporter (POT/PTR) (TC 2.A.17) family.

It is found in the cell membrane. Its function is as follows. Proton-dependent uptake of di- or tri-peptides. The sequence is that of Di-/tripeptide transporter (dtpT) from Lactobacillus helveticus (Lactobacillus suntoryeus).